The chain runs to 1143 residues: ATP-dependent helicase/deoxyribonuclease subunit B (1143 aa).

The UvrD-like helicase ATP-binding domain occupies 1–274; it reads MNYMHLGRAG…YGQTVKFQST (274 aa). 7-14 is an ATP binding site; that stretch reads GRAGTGKT. The region spanning 267 to 565 is the UvrD-like helicase C-terminal domain; sequence QTVKFQSTGL…RFSLVPPSLD (299 aa). [4Fe-4S] cluster is bound by residues Cys782, Cys1104, Cys1107, and Cys1113.

Belongs to the helicase family. AddB/RexB type 1 subfamily. Heterodimer of AddA and AddB. Mg(2+) is required as a cofactor. Requires [4Fe-4S] cluster as cofactor.

The heterodimer acts as both an ATP-dependent DNA helicase and an ATP-dependent, dual-direction single-stranded exonuclease. Recognizes the chi site generating a DNA molecule suitable for the initiation of homologous recombination. The AddB subunit has 5' -&gt; 3' nuclease activity but not helicase activity. The chain is ATP-dependent helicase/deoxyribonuclease subunit B from Exiguobacterium sibiricum (strain DSM 17290 / CCUG 55495 / CIP 109462 / JCM 13490 / 255-15).